The primary structure comprises 376 residues: Rhodopsin (376 aa).

Over 1–51 the chain is Extracellular; that stretch reads MSLINEPSYSAYSWGGQGGYGNQTVVDKVLPEMLHLIDPHWYQFPPMNPLW. An N-linked (GlcNAc...) asparagine glycan is attached at N22. The chain crosses the membrane as a helical span at residues 52 to 76; sequence HGLLGFVIGCLGFVSVVGNGMVIYI. The Cytoplasmic segment spans residues 77–88; the sequence is FSTTKGLRTPSN. The chain crosses the membrane as a helical span at residues 89-113; the sequence is LLVVNLAFSDFLMMLSMSPPMVINC. At 114–128 the chain is on the extracellular side; that stretch reads YYETWVLGPFMCELY. C125 and C202 are joined by a disulfide. Residues 129 to 148 form a helical membrane-spanning segment; sequence ALLGSLFGCGSIWTMVMIAL. At 149–167 the chain is on the cytoplasmic side; the sequence is DRYNVIVKGLAAKPMTNKT. A helical transmembrane segment spans residues 168-191; it reads AMLRILGIWAMSIAWTVFPLFGWN. Residues 192-215 are Extracellular-facing; that stretch reads RYVPEGNMTACGTDYLNKEWVSRS. N-linked (GlcNAc...) asparagine glycosylation occurs at N198. Residues 216–243 traverse the membrane as a helical segment; that stretch reads YILVYSVFVYFLPLATIIYSYWFIVQAV. The Cytoplasmic segment spans residues 244-278; sequence SAHEKQMREQAKKMNVASLRSAENANTSAECKLAK. A helical transmembrane segment spans residues 279–302; it reads VALMTISLWFFAWTPYLVTDFSGI. The Extracellular portion of the chain corresponds to 303 to 309; it reads FEWGKIS. The chain crosses the membrane as a helical span at residues 310–334; sequence PLATIWCSLFAKANAVYNPIVYGIS. Residue K321 is modified to N6-(retinylidene)lysine. Residues 335–376 lie on the Cytoplasmic side of the membrane; it reads HPKYRAALNKKFPSLACASEPDDTASQASGATTVSDEKSASA. Residues 353–376 form a disordered region; that stretch reads SEPDDTASQASGATTVSDEKSASA. The segment covering 358-368 has biased composition (polar residues); sequence TASQASGATTV.

It belongs to the G-protein coupled receptor 1 family. Opsin subfamily. Post-translationally, phosphorylated on some or all of the serine and threonine residues present in the C-terminal region.

The protein resides in the membrane. Functionally, visual pigments are the light-absorbing molecules that mediate vision. They consist of an apoprotein, opsin, covalently linked to cis-retinal. The protein is Rhodopsin of Sphodromantis sp. (Mantis).